The primary structure comprises 428 residues: Stromal membrane-associated protein 2 (428 aa).

The 127-residue stretch at 13-139 folds into the Arf-GAP domain; the sequence is QAVLANLLLE…INVLRKEKDD (127 aa). The C4-type zinc-finger motif lies at 28-51; sequence CADCQSKGPRWASWNIGVFICIRC. A phosphoserine mark is found at Ser127, Ser219, Ser224, Ser230, and Ser239. Positions 163 to 231 are interaction with clathrin heavy chains; it reads MPQKKEDAQL…SVSRKAVGSM (69 aa). The disordered stretch occupies residues 218–262; it reads PSPSSVSRKAVGSMPTAGSAGSVPENLNLFPEPGSKSEETGKKQL. Basic and acidic residues predominate over residues 252–262; it reads SKSEETGKKQL. The interaction with PICALM stretch occupies residues 339–428; sequence MGGMQASMMG…NQTLSPQMWK (90 aa).

Interacts with ARF1. Interacts with PICALM and clathrin heavy chains.

The protein resides in the cytoplasm. Its function is as follows. GTPase activating protein that acts on ARF1. Can also activate ARF6 (in vitro). May play a role in clathrin-dependent retrograde transport from early endosomes to the trans-Golgi network. In Mus musculus (Mouse), this protein is Stromal membrane-associated protein 2 (Smap2).